The chain runs to 477 residues: Stromelysin-3 (477 aa).

An N-terminal signal peptide occupies residues 1–17; the sequence is MHLLILLPALCVLGAHS. Positions 18–85 are cleaved as a propeptide — activation peptide; it reads APLSYTYLQH…SSSGRNRQKR (68 aa). The tract at residues 64–83 is disordered; sequence RCGVPDIPAPPDSSSGRNRQ. Zn(2+) is bound by residues Cys65, His152, and Asp154. Residues Asp159, Gly160, Gly162, and Ile164 each coordinate Ca(2+). Zn(2+) is bound by residues His167, His180, and His203. Residue Glu204 is part of the active site. 2 residues coordinate Zn(2+): His207 and His213. A disulfide bond links Cys279 and Cys466. Hemopexin repeat units follow at residues 280 to 324, 325 to 369, 370 to 418, and 419 to 466; these read KTNF…WRGI, PDTV…GISV, TQIQ…WRGV, and PKGI…FFNC.

Belongs to the peptidase M10A family. It depends on Ca(2+) as a cofactor. Zn(2+) is required as a cofactor. In terms of tissue distribution, expressed in fibroblast cells that are activated by thyroid hormone. High levels in resorbing tail.

The protein resides in the secreted. It is found in the extracellular space. The protein localises to the extracellular matrix. Its function is as follows. May be involved in the modification of the extracellular matrix during metamorphic apoptosis. This chain is Stromelysin-3 (mmp11), found in Xenopus laevis (African clawed frog).